The chain runs to 126 residues: Probable V-type proton ATPase subunit G (126 aa).

A disordered region spans residues Asn-23 to Glu-45. Positions Arg-26–Gln-35 are enriched in basic residues.

This sequence belongs to the V-ATPase G subunit family. In terms of assembly, V-ATPase is a heteromultimeric enzyme made up of two complexes: the ATP-hydrolytic V1 complex and the proton translocation V0 complex. The V1 complex consists of three catalytic AB heterodimers that form a heterohexamer, three peripheral stalks each consisting of EG heterodimers, one central rotor including subunits D and F, and the regulatory subunits C and H. The proton translocation complex V0 consists of the proton transport subunit a, a ring of proteolipid subunits c9c'', rotary subunit d, subunits e and f, and the accessory subunits vah-19/Ac45 and vah-20/PRR.

Functionally, subunit of the V1 complex of vacuolar(H+)-ATPase (V-ATPase), a multisubunit enzyme composed of a peripheral complex (V1) that hydrolyzes ATP and a membrane integral complex (V0) that translocates protons. V-ATPase is responsible for acidifying and maintaining the pH of intracellular compartments and in some cell types, is targeted to the plasma membrane, where it is responsible for acidifying the extracellular environment. In neurons, required for necrotic cell death by promoting intracellular acidification. This Caenorhabditis briggsae protein is Probable V-type proton ATPase subunit G.